The chain runs to 433 residues: Transcription factor TCP18 (433 aa).

Disordered regions lie at residues 130-163 (QRISTSQDPKMKKAKKPSRTDRHSKIKTAKGTRD) and 247-281 (DDRGSNTNTTETRGNKVDGRSMRGKRKRPEPRTPI). In terms of domain architecture, TCP spans 148–206 (RTDRHSKIKTAKGTRDRRMRLSLDVAKELFGLQDMLGFDKASKTVEWLLTQAKPEIIKI). In terms of domain architecture, R spans 287-304 (KEERAKARERAKGRTMEK).

Expressed in unelongated axillary buds, and, to a lower extent, in axillary structures such as flowers and siliques.

It is found in the nucleus. In terms of biological role, transcription factor that prevents axillary bud outgrowth and delays early axillary bud development. Indirectly required for the auxin-induced control of apical dominance. This chain is Transcription factor TCP18, found in Arabidopsis thaliana (Mouse-ear cress).